Consider the following 444-residue polypeptide: Phosphoglucosamine mutase (444 aa).

Ser-102 (phosphoserine intermediate) is an active-site residue. Positions 102, 241, 243, and 245 each coordinate Mg(2+). At Ser-102 the chain carries Phosphoserine.

It belongs to the phosphohexose mutase family. Mg(2+) serves as cofactor. Post-translationally, activated by phosphorylation.

It catalyses the reaction alpha-D-glucosamine 1-phosphate = D-glucosamine 6-phosphate. Functionally, catalyzes the conversion of glucosamine-6-phosphate to glucosamine-1-phosphate. This is Phosphoglucosamine mutase from Buchnera aphidicola subsp. Acyrthosiphon pisum (strain 5A).